A 480-amino-acid chain; its full sequence is ATP synthase subunit beta (480 aa).

Residue 166–173 (GGAGVGKT) coordinates ATP.

The protein belongs to the ATPase alpha/beta chains family. In terms of assembly, F-type ATPases have 2 components, CF(1) - the catalytic core - and CF(0) - the membrane proton channel. CF(1) has five subunits: alpha(3), beta(3), gamma(1), delta(1), epsilon(1). CF(0) has three main subunits: a(1), b(2) and c(9-12). The alpha and beta chains form an alternating ring which encloses part of the gamma chain. CF(1) is attached to CF(0) by a central stalk formed by the gamma and epsilon chains, while a peripheral stalk is formed by the delta and b chains.

It localises to the cell membrane. The catalysed reaction is ATP + H2O + 4 H(+)(in) = ADP + phosphate + 5 H(+)(out). Its function is as follows. Produces ATP from ADP in the presence of a proton gradient across the membrane. The catalytic sites are hosted primarily by the beta subunits. The protein is ATP synthase subunit beta of Streptomyces griseus subsp. griseus (strain JCM 4626 / CBS 651.72 / NBRC 13350 / KCC S-0626 / ISP 5235).